Here is a 227-residue protein sequence, read N- to C-terminus: MCFPNIHKQGYPFIAIAFVLTCIGFAFSFGLGLVFQIITVLCACFFRNPDRIVPVDDKLIISPADGLVTSVAEVESPIEAGKMVTRVSVFLSILNVHVNRAPVSGSVKLVEHRPGRFSPACTDGSTSENERVRSVIESTFGNHNIVIEQVAGVLARRIVCDLKVGDNVKLGSRMGIIRFGSRVNVYVPAGVPVLVTEGHTLVGGETVIADLDSERTAGYPRATFEKV.

Residue Ser181 is the Schiff-base intermediate with substrate; via pyruvic acid of the active site. Ser181 bears the Pyruvic acid (Ser); by autocatalysis mark.

Belongs to the phosphatidylserine decarboxylase family. PSD-A subfamily. As to quaternary structure, heterodimer of a large membrane-associated beta subunit and a small pyruvoyl-containing alpha subunit. Requires pyruvate as cofactor. Is synthesized initially as an inactive proenzyme. Formation of the active enzyme involves a self-maturation process in which the active site pyruvoyl group is generated from an internal serine residue via an autocatalytic post-translational modification. Two non-identical subunits are generated from the proenzyme in this reaction, and the pyruvate is formed at the N-terminus of the alpha chain, which is derived from the carboxyl end of the proenzyme. The post-translation cleavage follows an unusual pathway, termed non-hydrolytic serinolysis, in which the side chain hydroxyl group of the serine supplies its oxygen atom to form the C-terminus of the beta chain, while the remainder of the serine residue undergoes an oxidative deamination to produce ammonia and the pyruvoyl prosthetic group on the alpha chain.

The protein localises to the cell membrane. The enzyme catalyses a 1,2-diacyl-sn-glycero-3-phospho-L-serine + H(+) = a 1,2-diacyl-sn-glycero-3-phosphoethanolamine + CO2. The protein operates within phospholipid metabolism; phosphatidylethanolamine biosynthesis; phosphatidylethanolamine from CDP-diacylglycerol: step 2/2. In terms of biological role, catalyzes the formation of phosphatidylethanolamine (PtdEtn) from phosphatidylserine (PtdSer). In Anaplasma phagocytophilum (strain HZ), this protein is Phosphatidylserine decarboxylase proenzyme.